The sequence spans 226 residues: 7-cyano-7-deazaguanine synthase (226 aa).

10-20 (LSGGLDSATAA) is an ATP binding site. Zn(2+) is bound by residues Cys-191, Cys-199, Cys-202, and Cys-205.

This sequence belongs to the QueC family. The cofactor is Zn(2+).

It carries out the reaction 7-carboxy-7-deazaguanine + NH4(+) + ATP = 7-cyano-7-deazaguanine + ADP + phosphate + H2O + H(+). Its pathway is purine metabolism; 7-cyano-7-deazaguanine biosynthesis. Catalyzes the ATP-dependent conversion of 7-carboxy-7-deazaguanine (CDG) to 7-cyano-7-deazaguanine (preQ(0)). This is 7-cyano-7-deazaguanine synthase from Synechococcus sp. (strain CC9902).